Consider the following 1952-residue polypeptide: Protein ROS1A (1952 aa).

4 disordered regions span residues 72-157 (EVVG…CRSE), 693-778 (IIRP…ESTS), 1302-1334 (HGTS…DDNV), and 1367-1398 (LIEN…AGKK). 2 stretches are compositionally biased toward basic residues: residues 90–102 (PARK…HRPK) and 130–139 (GKRKYVRKKT). 2 stretches are compositionally biased toward basic and acidic residues: residues 709–720 (PRTDNHQVKVSE) and 727–747 (LPEK…EKPK). Residues 769-778 (TNPLQNESTS) are compositionally biased toward polar residues. The span at 1388–1398 (AKRPRVGAGKK) shows a compositional bias: basic residues. Cysteine 1582, cysteine 1589, cysteine 1592, and cysteine 1598 together coordinate [4Fe-4S] cluster.

This sequence belongs to the DNA glycosylase family. DEMETER subfamily. The cofactor is [4Fe-4S] cluster. In terms of tissue distribution, expressed in roots, leaf blades, leaf sheaths, apical and lateral shoot meristems, inflorescence meristems, lodicules, pollen grains, ovules and seeds. Expressed in vascular tissues of roots and leaves, pollen grains, pericarp, aleurone, and starchy endosperm.

It is found in the nucleus. Functionally, bifunctional DNA glycosylase/lyase, which excises 5-methylcytosine (5-meC) and 5-hydroxymethylcytosine (5-hmeC), leaving an apyrimidinic (AP) site that is subsequently incised by the lyase activity. DNA demethylase that is indispensable in both male and female gametophyte development. Involved in the regulation of DNA methylation in the promoters of RISBZ1/BZIP58 and DOF3/RPBF, two transcription factors that functions synergistically to positively regulate genes that are key players in the development of aleurone layers. Active DNA demethylation carried out by ROS1A in rice endosperms may restrict the number of aleurone cell layers. The polypeptide is Protein ROS1A (Oryza sativa subsp. japonica (Rice)).